The sequence spans 1732 residues: Serine/threonine-protein kinase MRCK alpha (1732 aa).

Positions 77–343 (FEILKVIGRG…IEDFKKHPFF (267 aa)) constitute a Protein kinase domain. Residues 83–91 (IGRGAFGEV) and Lys106 contribute to the ATP site. Asp201 serves as the catalytic Proton acceptor. 2 positions are modified to phosphoserine; by autocatalysis: Ser222 and Ser234. Thr240 carries the post-translational modification Phosphothreonine; by autocatalysis. The AGC-kinase C-terminal domain maps to 344–414 (SGIDWDNIRN…TSSCVLSDRS (71 aa)). Coiled coils occupy residues 437 to 820 (NNLA…WEAQ) and 880 to 943 (LELQ…SEKG). The tract at residues 968–1003 (ERSPSCTPASKGRRTVDSTPLSVHTPTLRKKGCPGS) is disordered. The Phorbol-ester/DAG-type zinc-finger motif lies at 1012-1062 (THQFFVKSFTTPTKCHQCTSLMVGLIRQGCSCEVCGFSCHITCVNKAPTTC). The PH domain occupies 1082–1201 (GTAYEGHVRI…WVGVLSELHK (120 aa)). Ser1127 carries the post-translational modification Phosphoserine. The CNH domain occupies 1227–1499 (IKTTQAAAII…RPLNNEGSLN (273 aa)). Ser1545 is subject to Phosphoserine. Residues 1571 to 1584 (ISNPTNFNHIAHMG) form the CRIB domain. Positions 1591–1732 (ILKDLPMNPR…ESTDRGSWDP (142 aa)) are disordered. A compositionally biased stretch (polar residues) spans 1604-1619 (SRTVFSGSVSIPSITK). Phosphoserine occurs at positions 1611, 1613, 1629, 1651, 1664, 1669, and 1693. The span at 1625–1640 (GRSMSASSGLSARSSA) shows a compositional bias: low complexity. A compositionally biased stretch (low complexity) spans 1665 to 1674 (PSEGSLSSGG). Low complexity predominate over residues 1697–1707 (STASNSSNLSS). A phosphoserine mark is found at Ser1719 and Ser1721.

It belongs to the protein kinase superfamily. AGC Ser/Thr protein kinase family. DMPK subfamily. As to quaternary structure, homodimer and homotetramer via the coiled coil regions. Interacts tightly with GTP-bound but not GDP-bound CDC42. Forms a tripartite complex with MYO18A and LURAP1 with the latter acting as an adapter connecting CDC42BPA and MYO18A. LURAP1 binding results in activation of CDC42BPA by abolition of its negative autoregulation. Interacts with LURAP1. Interacts (via AGC-kinase C-terminal domain) with FAM89B/LRAP25 (via LRR repeat). Forms a tripartite complex with FAM89B/LRAP25 and LIMK1. It depends on Mg(2+) as a cofactor. In terms of processing, proteolytically cleaved by caspases upon apoptosis induction. The cleavage at Asp-478 by CASP3 increases its kinase activity (in vitro). Abundant in the heart, brain, skeletal muscle, kidney, and pancreas, with little or no expression in the lung and liver.

Its subcellular location is the cytoplasm. It localises to the cell projection. The protein resides in the lamellipodium. The enzyme catalyses L-seryl-[protein] + ATP = O-phospho-L-seryl-[protein] + ADP + H(+). The catalysed reaction is L-threonyl-[protein] + ATP = O-phospho-L-threonyl-[protein] + ADP + H(+). Maintained in an inactive, closed conformation by an interaction between the kinase domain and the negative autoregulatory C-terminal coiled-coil region. Agonist binding to the phorbol ester binding site disrupts this, releasing the kinase domain to allow N-terminus-mediated dimerization and kinase activation by transautophosphorylation. Inhibited by chelerythrine chloride. Serine/threonine-protein kinase which is an important downstream effector of CDC42 and plays a role in the regulation of cytoskeleton reorganization and cell migration. Regulates actin cytoskeletal reorganization via phosphorylation of PPP1R12C and MYL9/MLC2. In concert with MYO18A and LURAP1, is involved in modulating lamellar actomyosin retrograde flow that is crucial to cell protrusion and migration. Phosphorylates: PPP1R12A, LIMK1 and LIMK2. May play a role in TFRC-mediated iron uptake. In concert with FAM89B/LRAP25 mediates the targeting of LIMK1 to the lamellipodium resulting in its activation and subsequent phosphorylation of CFL1 which is important for lamellipodial F-actin regulation. Triggers the formation of an extrusion apical actin ring required for epithelial extrusion of apoptotic cells. The chain is Serine/threonine-protein kinase MRCK alpha from Homo sapiens (Human).